The following is a 539-amino-acid chain: Acid-sensing ion channel 4 (539 aa).

At 1–68 the chain is on the cytoplasmic side; it reads MPIEIVCKIK…GPGPHGLRRT (68 aa). Residues 69–89 traverse the membrane as a helical segment; it reads LWALALLTSLAAFLYQAASLA. The Extracellular segment spans residues 90-438; that stretch reads RGYLTRPHLV…EQQAAYGLSA (349 aa). 2 disulfide bridges follow: cysteine 118–cysteine 202 and cysteine 180–cysteine 187. N-linked (GlcNAc...) asparagine glycosylation is found at asparagine 191, asparagine 243, asparagine 341, and asparagine 376. 5 disulfides stabilise this stretch: cysteine 296–cysteine 375, cysteine 318–cysteine 371, cysteine 322–cysteine 369, cysteine 331–cysteine 353, and cysteine 333–cysteine 345. A helical membrane pass occupies residues 439-459; sequence LLGDLGGQMGLFIGASILTLL. A GAS motif; ion selectivity filter motif is present at residues 452 to 454; sequence GAS. The Cytoplasmic segment spans residues 460–539; sequence EILDYIYEVS…PGSLFEDFAC (80 aa). The tract at residues 500 to 531 is disordered; it reads KEQSPCPSRGRAEGGGASSLLPNHHHPHGPPG.

Belongs to the amiloride-sensitive sodium channel (TC 1.A.6) family. ASIC4 subfamily. Homotrimer. Heterotrimer; with other ASIC proteins producing functional channels.

The protein localises to the cell membrane. In terms of biological role, does not exhibit measurable stand-alone pH-gated sodium channel activity but may form pH-gated heterotrimeric sodium channels. Its activity could also depend on alternative gating mechanisms. This chain is Acid-sensing ion channel 4, found in Mus musculus (Mouse).